The sequence spans 264 residues: MKQYLELMQKVLDEGTQKNDRTGTGTLSIFGHQMRFNLREGFPLVTTKRCHLRSIIHELLWFLQGDTNVAYLHENNVTIWDEWADENGNLGPVYGKQWRAWPAPDGRHIDQITTVMNQLKNDPDSRRIIVSAWNVGELDKMALAPCHAFFQFYVADGKLSCQLYQRSCDVFLGLPFNIASYALLVHMMAQQCDLEVGDFVWTGGDTHLYSNHMEQTHLQLSREPRALPKLVIKRKPDSIFDYRFEDFEIEGYDPHPGIKAPVAI.

Arginine 21 is a dUMP binding site. Residue histidine 51 coordinates (6R)-5,10-methylene-5,6,7,8-tetrahydrofolate. 126–127 (RR) provides a ligand contact to dUMP. The active-site Nucleophile is the cysteine 146. Residues 166–169 (RSCD), asparagine 177, and 207–209 (HLY) contribute to the dUMP site. A (6R)-5,10-methylene-5,6,7,8-tetrahydrofolate-binding site is contributed by aspartate 169. Alanine 263 contacts (6R)-5,10-methylene-5,6,7,8-tetrahydrofolate.

The protein belongs to the thymidylate synthase family. Bacterial-type ThyA subfamily. Homodimer.

The protein resides in the cytoplasm. The enzyme catalyses dUMP + (6R)-5,10-methylene-5,6,7,8-tetrahydrofolate = 7,8-dihydrofolate + dTMP. The protein operates within pyrimidine metabolism; dTTP biosynthesis. In terms of biological role, catalyzes the reductive methylation of 2'-deoxyuridine-5'-monophosphate (dUMP) to 2'-deoxythymidine-5'-monophosphate (dTMP) while utilizing 5,10-methylenetetrahydrofolate (mTHF) as the methyl donor and reductant in the reaction, yielding dihydrofolate (DHF) as a by-product. This enzymatic reaction provides an intracellular de novo source of dTMP, an essential precursor for DNA biosynthesis. This Citrobacter koseri (strain ATCC BAA-895 / CDC 4225-83 / SGSC4696) protein is Thymidylate synthase.